The primary structure comprises 276 residues: Glutamate racemase (276 aa).

Substrate-binding positions include 10–11 (DS) and 42–43 (YG). Cys74 (proton donor/acceptor) is an active-site residue. 75–76 (NT) serves as a coordination point for substrate. The active-site Proton donor/acceptor is the Cys185. 186–187 (TH) contributes to the substrate binding site.

This sequence belongs to the aspartate/glutamate racemases family.

The catalysed reaction is L-glutamate = D-glutamate. Its pathway is cell wall biogenesis; peptidoglycan biosynthesis. Provides the (R)-glutamate required for cell wall biosynthesis. The sequence is that of Glutamate racemase from Levilactobacillus brevis (Lactobacillus brevis).